The chain runs to 118 residues: Large ribosomal subunit protein bL20 (118 aa).

The protein belongs to the bacterial ribosomal protein bL20 family.

Functionally, binds directly to 23S ribosomal RNA and is necessary for the in vitro assembly process of the 50S ribosomal subunit. It is not involved in the protein synthesizing functions of that subunit. This Campylobacter curvus (strain 525.92) protein is Large ribosomal subunit protein bL20.